A 132-amino-acid polypeptide reads, in one-letter code: Matrix protein (132 aa).

It localises to the virion membrane. Functionally, envelope protein that may play a role in host-cell attachment and viral genome entry. The protein is Matrix protein of Halorubrum pleomorphic virus 1 (HRPV-1).